The following is a 283-amino-acid chain: Pseudokinase OPG198 (283 aa).

Methionine 1 and lysine 30 together coordinate ATP. Residues 1–283 (MESFKYCFDN…DRLRRLFIQD (283 aa)) enclose the Protein kinase domain.

Belongs to the protein kinase superfamily. Ser/Thr protein kinase family. Poxviruses subfamily. Interacts with B1/VPK1. Interacts with host VRK1. Interacts with host VRK2.

Its subcellular location is the host nucleus. Both catalytically active kinases B1/VPK1 and host VRK2 repress B12 inhibitory activity in a B1/VPK1 deletion mutant strain. Functionally, pseudokinase that plays a role in viral DNA replication repression by activating the antiviral protein BANF1 and inhibiting the activity of host VRK1, a cellular modulator of BANF1. The sequence is that of Pseudokinase OPG198 (OPG198) from Vaccinia virus (strain Ankara) (VACV).